Consider the following 531-residue polypeptide: T-complex protein 1 subunit zeta-2 (531 aa).

The protein belongs to the TCP-1 chaperonin family. As to quaternary structure, component of the chaperonin-containing T-complex (TRiC), a heterooligomeric complex of about 850 to 900 kDa that forms two stacked rings, 12 to 16 nm in diameter. In terms of tissue distribution, testis specific.

It localises to the cytoplasm. Its function is as follows. Component of the chaperonin-containing T-complex (TRiC), a molecular chaperone complex that assists the folding of proteins upon ATP hydrolysis. The protein is T-complex protein 1 subunit zeta-2 (Cct6b) of Mus musculus (Mouse).